An 840-amino-acid polypeptide reads, in one-letter code: Probable alpha-glucuronidase A (840 aa).

A signal peptide spans 1–19 (MWSGIPIFALLSSIGIAAA). Asparagine 50, asparagine 149, asparagine 222, asparagine 262, asparagine 279, asparagine 310, asparagine 465, asparagine 527, asparagine 576, asparagine 610, asparagine 682, asparagine 723, and asparagine 732 each carry an N-linked (GlcNAc...) asparagine glycan.

This sequence belongs to the glycosyl hydrolase 67 family.

It is found in the secreted. It catalyses the reaction an alpha-D-glucuronoside + H2O = D-glucuronate + an alcohol. Functionally, alpha-glucuronidase involved in the hydrolysis of xylan, a major structural heterogeneous polysaccharide found in plant biomass representing the second most abundant polysaccharide in the biosphere, after cellulose. Releases 4-O-methylglucuronic acid from xylan. This is Probable alpha-glucuronidase A (aguA) from Aspergillus fumigatus (strain CBS 144.89 / FGSC A1163 / CEA10) (Neosartorya fumigata).